Reading from the N-terminus, the 286-residue chain is Octanoyltransferase (286 aa).

The region spanning 50–278 (LRTPDELWIV…NIAQRHAGVI (229 aa)) is the BPL/LPL catalytic domain. Substrate-binding positions include 89 to 96 (RGGQVTWH), 190 to 192 (SLG), and 203 to 205 (GVA). Residue C221 is the Acyl-thioester intermediate of the active site.

Belongs to the LipB family.

It localises to the cytoplasm. It carries out the reaction octanoyl-[ACP] + L-lysyl-[protein] = N(6)-octanoyl-L-lysyl-[protein] + holo-[ACP] + H(+). It functions in the pathway protein modification; protein lipoylation via endogenous pathway; protein N(6)-(lipoyl)lysine from octanoyl-[acyl-carrier-protein]: step 1/2. In terms of biological role, catalyzes the transfer of endogenously produced octanoic acid from octanoyl-acyl-carrier-protein onto the lipoyl domains of lipoate-dependent enzymes. Lipoyl-ACP can also act as a substrate although octanoyl-ACP is likely to be the physiological substrate. In Psychrobacter arcticus (strain DSM 17307 / VKM B-2377 / 273-4), this protein is Octanoyltransferase.